Consider the following 195-residue polypeptide: Ubiquitin-conjugating enzyme E2 T (195 aa).

One can recognise a UBC core domain in the interval 2–152 (QRTSRLKREL…ARQWTEKHAR (151 aa)). Cys-86 acts as the Glycyl thioester intermediate in catalysis. Residue Lys-91 forms a Glycyl lysine isopeptide (Lys-Gly) (interchain with G-Cter in ubiquitin) linkage. Over residues 146–157 (WTEKHARQKTDE) the composition is skewed to basic and acidic residues. Residues 146–195 (WTEKHARQKTDEEGMPGSLPEVGGSEGPSAAQKRKAGQLSSGGKRFCPDV) form a disordered region. A Glycyl lysine isopeptide (Lys-Gly) (interchain with G-Cter in ubiquitin) cross-link involves residue Lys-180. A Glycyl lysine isopeptide (Lys-Gly) (interchain with G-Cter in SUMO2) cross-link involves residue Lys-189.

This sequence belongs to the ubiquitin-conjugating enzyme family. Interacts with FANCL and BRCA1. Post-translationally, auto-ubiquitinated. Effects of auto-monoubiquitination at Lys-91 and Lys-180 are unclear.

The protein resides in the nucleus. The enzyme catalyses S-ubiquitinyl-[E1 ubiquitin-activating enzyme]-L-cysteine + [E2 ubiquitin-conjugating enzyme]-L-cysteine = [E1 ubiquitin-activating enzyme]-L-cysteine + S-ubiquitinyl-[E2 ubiquitin-conjugating enzyme]-L-cysteine.. It participates in protein modification; protein ubiquitination. Its function is as follows. Accepts ubiquitin from the E1 complex and catalyzes its covalent attachment to other proteins. Catalyzes monoubiquitination. Involved in mitomycin-C (MMC)-induced DNA repair: acts as a specific E2 ubiquitin-conjugating enzyme for the Fanconi anemia complex by associating with E3 ubiquitin-protein ligase FANCL and catalyzing monoubiquitination of FANCD2, a key step in the DNA damage pathway. Also mediates monoubiquitination of FANCL and FANCI. May contribute to ubiquitination and degradation of BRCA1. In vitro able to promote polyubiquitination using all 7 ubiquitin Lys residues, but may prefer 'Lys-11'-, 'Lys-27'-, 'Lys-48'- and 'Lys-63'-linked polyubiquitination. The polypeptide is Ubiquitin-conjugating enzyme E2 T (UBE2T) (Bos taurus (Bovine)).